The sequence spans 373 residues: Bifunctional enzyme IspD/IspF (373 aa).

Positions 1–213 (MSDLTLVLLG…CLQKPSATKR (213 aa)) are 2-C-methyl-D-erythritol 4-phosphate cytidylyltransferase. Positions 213–373 (RIGNGLDVHA…TLHYFDWSEI (161 aa)) are 2-C-methyl-D-erythritol 2,4-cyclodiphosphate synthase. Residues Asp219 and His221 each contribute to the a divalent metal cation site. 4-CDP-2-C-methyl-D-erythritol 2-phosphate is bound by residues 219–221 (DVH) and 245–246 (HS). His253 contributes to the a divalent metal cation binding site. Residues 267–269 (DIG), 272–276 (FPDSD), 343–346 (TTTE), Phe350, and Arg353 each bind 4-CDP-2-C-methyl-D-erythritol 2-phosphate.

This sequence in the N-terminal section; belongs to the IspD/TarI cytidylyltransferase family. IspD subfamily. In the C-terminal section; belongs to the IspF family. A divalent metal cation serves as cofactor.

It catalyses the reaction 2-C-methyl-D-erythritol 4-phosphate + CTP + H(+) = 4-CDP-2-C-methyl-D-erythritol + diphosphate. It carries out the reaction 4-CDP-2-C-methyl-D-erythritol 2-phosphate = 2-C-methyl-D-erythritol 2,4-cyclic diphosphate + CMP. The protein operates within isoprenoid biosynthesis; isopentenyl diphosphate biosynthesis via DXP pathway; isopentenyl diphosphate from 1-deoxy-D-xylulose 5-phosphate: step 2/6. Its pathway is isoprenoid biosynthesis; isopentenyl diphosphate biosynthesis via DXP pathway; isopentenyl diphosphate from 1-deoxy-D-xylulose 5-phosphate: step 4/6. Bifunctional enzyme that catalyzes the formation of 4-diphosphocytidyl-2-C-methyl-D-erythritol from CTP and 2-C-methyl-D-erythritol 4-phosphate (MEP) (IspD), and catalyzes the conversion of 4-diphosphocytidyl-2-C-methyl-D-erythritol 2-phosphate (CDP-ME2P) to 2-C-methyl-D-erythritol 2,4-cyclodiphosphate (ME-CPP) with a corresponding release of cytidine 5-monophosphate (CMP) (IspF). This is Bifunctional enzyme IspD/IspF from Nitratiruptor sp. (strain SB155-2).